A 288-amino-acid chain; its full sequence is METNQNEKGPSLPSYPAGGIMSVSNSNADTNQGVTQHPLANRIVNPNYYNMGFNPYSGFNSFIPSFNPFVPLETNLPGNGPISSLQVIESIVGAVGSIAQVLESTLMAAHMSYNTFVSVSENLNKLKSSIGAIFGIVSLLSRLKRLVLKFFKHSKIDEMNSQEYDVFEKEEGNHKNSIYSIVSSLAIILGLVGLPYAIIRLFKNIYEKEKQIQQAKIRKKIDSLEFCKADYEFMSRDPGVEMSLKKGDIIAILSKTDTQGNPCEWWQGRKRSGETGWFPSNYCSIISR.

The segment at 1 to 32 is disordered; it reads METNQNEKGPSLPSYPAGGIMSVSNSNADTNQ. Polar residues predominate over residues 22–32; that stretch reads SVSNSNADTNQ. The chain crosses the membrane as a helical span at residues 178–198; it reads IYSIVSSLAIILGLVGLPYAI. Residues 222–288 form the SH3 domain; the sequence is DSLEFCKADY…PSNYCSIISR (67 aa).

This sequence belongs to the peroxin-13 family. Interacts (via SH3 domain) with PEX14 (via SH3-binding motif); forming the PEX13-PEX14 docking complex.

Its subcellular location is the peroxisome membrane. Functionally, component of the PEX13-PEX14 docking complex, a translocon channel that specifically mediates the import of peroxisomal cargo proteins bound to PEX5 receptor. The PEX13-PEX14 docking complex forms a large import pore which can be opened to a diameter of about 9 nm. Mechanistically, PEX5 receptor along with cargo proteins associates with the PEX14 subunit of the PEX13-PEX14 docking complex in the cytosol, leading to the insertion of the receptor into the organelle membrane with the concomitant translocation of the cargo into the peroxisome matrix. The polypeptide is Peroxisomal membrane protein pex13 (pex13) (Schizosaccharomyces pombe (strain 972 / ATCC 24843) (Fission yeast)).